The following is a 1220-amino-acid chain: Putative cell agglutination protein SPAPB2C8.01 (1220 aa).

Residues 1 to 21 (MAVSRLLILICLYSFVTFAYP) form the signal peptide. N-linked (GlcNAc...) asparagine glycosylation is found at asparagine 44, asparagine 72, asparagine 131, and asparagine 160. Tandem repeats lie at residues 110–145 (NTIT…EPAA), 146–181 (GTVT…EPEA), 182–217 (GTVT…DTAA), 218–253 (GTVT…EPEA), 254–289 (GTVT…DTAA), 290–325 (GTVT…EPEA), 326–361 (GTVT…DTAA), 362–397 (GTVT…EPEA), 398–433 (GTVT…DTAA), 434–469 (GTVT…EPEA), 470–505 (GTVT…DTAA), 506–541 (GTVT…EPEA), 542–577 (GTVT…DTAA), 578–613 (GTVT…EPEA), 614–649 (GTVT…EPAA), 650–685 (GTVT…EPAA), 686–721 (GTVT…EPAA), 722–757 (GTVT…EPAA), 758–793 (GTVT…DPEA), 794–829 (GSVT…EPAA), 830–865 (GTVT…DPEA), 866–901 (GSVT…EPAA), 902–937 (GTVT…EPSG), and 938–973 (STVT…LPAP). The tract at residues 110 to 973 (NTITTTLYSG…GTVEVILPAP (864 aa)) is 24 X 36 AA approximate tandem repeats. N-linked (GlcNAc...) asparagine glycosylation is present at asparagine 232. The N-linked (GlcNAc...) asparagine glycan is linked to asparagine 304. Residue asparagine 376 is glycosylated (N-linked (GlcNAc...) asparagine). Asparagine 448 carries N-linked (GlcNAc...) asparagine glycosylation. The N-linked (GlcNAc...) asparagine glycan is linked to asparagine 520. N-linked (GlcNAc...) asparagine glycosylation occurs at asparagine 592. A PA14 domain is found at 1039-1202 (FTQPAYFGSS…YAATSYAYTA (164 aa)).

It belongs to the mam3/map4 family.

It is found in the cell surface. Its function is as follows. May be involved in agglutination during conjugation or other aspects of colony formation. This Schizosaccharomyces pombe (strain 972 / ATCC 24843) (Fission yeast) protein is Putative cell agglutination protein SPAPB2C8.01.